Here is a 356-residue protein sequence, read N- to C-terminus: Histidinol-phosphate aminotransferase 2 (356 aa).

Lysine 214 bears the N6-(pyridoxal phosphate)lysine mark.

Belongs to the class-II pyridoxal-phosphate-dependent aminotransferase family. Histidinol-phosphate aminotransferase subfamily. In terms of assembly, homodimer. Requires pyridoxal 5'-phosphate as cofactor.

The catalysed reaction is L-histidinol phosphate + 2-oxoglutarate = 3-(imidazol-4-yl)-2-oxopropyl phosphate + L-glutamate. It participates in amino-acid biosynthesis; L-histidine biosynthesis; L-histidine from 5-phospho-alpha-D-ribose 1-diphosphate: step 7/9. In Dechloromonas aromatica (strain RCB), this protein is Histidinol-phosphate aminotransferase 2.